Here is a 559-residue protein sequence, read N- to C-terminus: 5'-AMP-activated protein kinase catalytic subunit alpha-1 (559 aa).

One can recognise a Protein kinase domain in the interval 27 to 279; that stretch reads YILGDTLGVG…IKDIREHEWF (253 aa). Residue Thr-32 is modified to Phosphothreonine. Residues 33-41 and Lys-56 contribute to the ATP site; that span reads LGVGTFGKV. The active-site Proton acceptor is Asp-150. Thr-183 carries the post-translational modification Phosphothreonine; by LKB1 and CaMKK2. Residues 302-381 form an AIS region; that stretch reads EALKEVCEKF…PERVPFLVAE (80 aa). Phosphothreonine is present on Thr-355. Ser-356 carries the phosphoserine modification. Ser-360 bears the Phosphoserine; by ULK1 mark. The residue at position 368 (Thr-368) is a Phosphothreonine; by ULK1. Thr-382 carries the post-translational modification Phosphothreonine. Ser-397 carries the phosphoserine; by ULK1 modification. Phosphoserine occurs at positions 467 and 486. Polar residues predominate over residues 485 to 505; that stretch reads KSGTATPQRSGSISNYRSCQR. Residues 485–536 are disordered; sequence KSGTATPQRSGSISNYRSCQRSDSDAEAQGKPSDVSLTSSVTSLDSSPVDVA. At Thr-488 the chain carries Phosphothreonine; by ULK1. Thr-490 is modified (phosphothreonine). Phosphoserine is present on residues Ser-496, Ser-508, Ser-524, and Ser-527. Positions 516–535 are enriched in low complexity; the sequence is PSDVSLTSSVTSLDSSPVDV.

Belongs to the protein kinase superfamily. CAMK Ser/Thr protein kinase family. SNF1 subfamily. AMPK is a heterotrimer of an alpha catalytic subunit (PRKAA1 or PRKAA2), a beta (PRKAB1 or PRKAB2) and a gamma non-catalytic subunits (PRKAG1, PRKAG2 or PRKAG3). Interacts with FNIP1 and FNIP2. The cofactor is Mg(2+). In terms of processing, phosphorylated at Thr-183 by STK11/LKB1 in complex with STE20-related adapter-alpha (STRADA) pseudo kinase and CAB39. Also phosphorylated at Thr-183 by CAMKK2; triggered by a rise in intracellular calcium ions, without detectable changes in the AMP/ATP ratio. CAMKK1 can also phosphorylate Thr-183, but at a much lower level. Dephosphorylated by protein phosphatase 2A and 2C (PP2A and PP2C). Phosphorylated by ULK1 and ULK2; leading to negatively regulate AMPK activity and suggesting the existence of a regulatory feedback loop between ULK1, ULK2 and AMPK. Dephosphorylated by PPM1A and PPM1B. Ubiquitinated. Post-translationally, glycosylated; O-GlcNAcylated by OGT, promoting the AMP-activated protein kinase (AMPK) activity.

The protein resides in the cytoplasm. It is found in the nucleus. It catalyses the reaction L-seryl-[protein] + ATP = O-phospho-L-seryl-[protein] + ADP + H(+). It carries out the reaction L-threonyl-[protein] + ATP = O-phospho-L-threonyl-[protein] + ADP + H(+). The enzyme catalyses L-seryl-[acetyl-CoA carboxylase] + ATP = O-phospho-L-seryl-[acetyl-CoA carboxylase] + ADP + H(+). The catalysed reaction is L-seryl-[3-hydroxy-3-methylglutaryl-coenzyme A reductase] + ATP = O-phospho-L-seryl-[3-hydroxy-3-methylglutaryl-coenzyme A reductase] + ADP + H(+). It catalyses the reaction L-seryl-[tau protein] + ATP = O-phospho-L-seryl-[tau protein] + ADP + H(+). It carries out the reaction L-threonyl-[tau protein] + ATP = O-phospho-L-threonyl-[tau protein] + ADP + H(+). With respect to regulation, activated by phosphorylation on Thr-183. Binding of AMP to non-catalytic gamma subunit (PRKAG1, PRKAG2 or PRKAG3) results in allosteric activation, inducing phosphorylation on Thr-183. AMP-binding to gamma subunit also sustains activity by preventing dephosphorylation of Thr-183. ADP also stimulates Thr-183 phosphorylation, without stimulating already phosphorylated AMPK. ATP promotes dephosphorylation of Thr-183, rendering the enzyme inactive. Under physiological conditions AMPK mainly exists in its inactive form in complex with ATP, which is much more abundant than AMP. Selectively inhibited by compound C (6-[4-(2-Piperidin-1-yl-ethoxy)-phenyl)]-3-pyridin-4-yl-pyyrazolo[1,5-a] pyrimidine. Activated by resveratrol, a natural polyphenol present in red wine, and S17834, a synthetic polyphenol. In terms of biological role, catalytic subunit of AMP-activated protein kinase (AMPK), an energy sensor protein kinase that plays a key role in regulating cellular energy metabolism. In response to reduction of intracellular ATP levels, AMPK activates energy-producing pathways and inhibits energy-consuming processes: inhibits protein, carbohydrate and lipid biosynthesis, as well as cell growth and proliferation. AMPK acts via direct phosphorylation of metabolic enzymes, and by longer-term effects via phosphorylation of transcription regulators. Regulates lipid synthesis by phosphorylating and inactivating lipid metabolic enzymes such as ACACA, ACACB, GYS1, HMGCR and LIPE; regulates fatty acid and cholesterol synthesis by phosphorylating acetyl-CoA carboxylase (ACACA and ACACB) and hormone-sensitive lipase (LIPE) enzymes, respectively. Promotes lipolysis of lipid droplets by mediating phosphorylation of isoform 1 of CHKA (CHKalpha2). Regulates insulin-signaling and glycolysis by phosphorylating IRS1, PFKFB2 and PFKFB3. AMPK stimulates glucose uptake in muscle by increasing the translocation of the glucose transporter SLC2A4/GLUT4 to the plasma membrane, possibly by mediating phosphorylation of TBC1D4/AS160. Regulates transcription and chromatin structure by phosphorylating transcription regulators involved in energy metabolism such as CRTC2/TORC2, FOXO3, histone H2B, HDAC5, MEF2C, MLXIPL/ChREBP, EP300, HNF4A, p53/TP53, SREBF1, SREBF2 and PPARGC1A. Acts as a key regulator of glucose homeostasis in liver by phosphorylating CRTC2/TORC2, leading to CRTC2/TORC2 sequestration in the cytoplasm. In response to stress, phosphorylates 'Ser-36' of histone H2B (H2BS36ph), leading to promote transcription. Acts as a key regulator of cell growth and proliferation by phosphorylating FNIP1, TSC2, RPTOR, WDR24 and ATG1/ULK1: in response to nutrient limitation, negatively regulates the mTORC1 complex by phosphorylating RPTOR component of the mTORC1 complex and by phosphorylating and activating TSC2. Also phosphorylates and inhibits GATOR2 subunit WDR24 in response to nutrient limitation, leading to suppress glucose-mediated mTORC1 activation. In response to energetic stress, phosphorylates FNIP1, inactivating the non-canonical mTORC1 signaling, thereby promoting nuclear translocation of TFEB and TFE3, and inducing transcription of lysosomal or autophagy genes. In response to nutrient limitation, promotes autophagy by phosphorylating and activating ATG1/ULK1. In that process, it also activates WDR45/WIPI4. Phosphorylates CASP6, thereby preventing its autoprocessing and subsequent activation. In response to nutrient limitation, phosphorylates transcription factor FOXO3 promoting FOXO3 mitochondrial import. Also acts as a regulator of cellular polarity by remodeling the actin cytoskeleton; probably by indirectly activating myosin. AMPK also acts as a regulator of circadian rhythm by mediating phosphorylation of CRY1, leading to destabilize it. May regulate the Wnt signaling pathway by phosphorylating CTNNB1, leading to stabilize it. Also has tau-protein kinase activity: in response to amyloid beta A4 protein (APP) exposure, activated by CAMKK2, leading to phosphorylation of MAPT/TAU; however the relevance of such data remains unclear in vivo. Also phosphorylates CFTR, EEF2K, KLC1, NOS3 and SLC12A1. Regulates hepatic lipogenesis. Activated via SIRT3, represses sterol regulatory element-binding protein (SREBP) transcriptional activities and ATP-consuming lipogenesis to restore cellular energy balance. Upon stress, regulates mitochondrial fragmentation through phosphorylation of MTFR1L. This Mus musculus (Mouse) protein is 5'-AMP-activated protein kinase catalytic subunit alpha-1 (Prkaa1).